The sequence spans 59 residues: UPF0391 membrane protein Geob_0344 (59 aa).

Helical transmembrane passes span 4 to 24 (WAAIFFIIAIVAAVFGFTGIA) and 33 to 53 (FLFILFLVVALIMLILGITAG).

The protein belongs to the UPF0391 family.

It is found in the cell membrane. The chain is UPF0391 membrane protein Geob_0344 from Geotalea daltonii (strain DSM 22248 / JCM 15807 / FRC-32) (Geobacter daltonii).